The sequence spans 336 residues: Plant-specific TFIIB-related protein 2 (336 aa).

Residues 2–34 (EEETCLDCKRPTIMVVDHSSGDTICSECGLVLE) form a TFIIB-type zinc finger. Positions 6, 9, 26, and 29 each coordinate Zn(2+).

In terms of tissue distribution, specifically expressed in reproductive organs and seeds.

It localises to the nucleus. Its function is as follows. Plant-specific TFIIB-related protein involved in the regulation of endosperm proliferation during the syncytial phase of endosperm development. Does not contribute to RNA polymerase IV or V activities in reproductive tissues. The chain is Plant-specific TFIIB-related protein 2 from Arabidopsis thaliana (Mouse-ear cress).